We begin with the raw amino-acid sequence, 152 residues long: Large ribosomal subunit protein eL14 (152 aa).

It belongs to the eukaryotic ribosomal protein eL14 family.

This chain is Large ribosomal subunit protein eL14 (RPL14), found in Lumbricus rubellus (Humus earthworm).